The chain runs to 153 residues: Ribosome maturation factor RimP (153 aa).

Belongs to the RimP family.

Its subcellular location is the cytoplasm. Its function is as follows. Required for maturation of 30S ribosomal subunits. This chain is Ribosome maturation factor RimP, found in Clostridium botulinum (strain Alaska E43 / Type E3).